The sequence spans 430 residues: Drebrin-like protein (430 aa).

The region spanning Asn-4 to Ala-133 is the ADF-H domain. The residue at position 26 (Thr-26) is a Phosphothreonine. 2 positions are modified to phosphoserine: Gly-137 and Ser-160. Lys-176 is subject to N6-acetyllysine. Residues Lys-176 to Ala-231 adopt a coiled-coil conformation. A phosphoserine mark is found at Ala-183 and Ser-232. The tract at residues Arg-219–Ser-283 is disordered. Residues Pro-233–Val-244 show a composition bias toward polar residues. Basic and acidic residues predominate over residues Ser-245–Ala-267. Polar residues predominate over residues Met-268–Gln-277. Ser-269, Ser-272, Ser-275, and Ser-283 each carry phosphoserine. Lys-288 bears the N6-acetyllysine mark. The residue at position 291 (Thr-291) is a Phosphothreonine. A phosphotyrosine mark is found at Tyr-334 and Tyr-344. The 60-residue stretch at Gly-371–Glu-430 folds into the SH3 domain.

The protein belongs to the ABP1 family. In terms of assembly, interacts with SHANK2, SHANK3 and SYN1. Interacts with FGD1 and DNM1. Interacts with ANKRD54. Interacts with COBL. Interacts with WASL and WIPF1. Interacts with MAP4K1 and PRAM1. In terms of processing, degraded by caspases during apoptosis.

The protein localises to the cytoplasm. The protein resides in the cytoskeleton. It is found in the cell projection. It localises to the lamellipodium. Its subcellular location is the ruffle. The protein localises to the cell cortex. The protein resides in the cytosol. It is found in the synapse. It localises to the perikaryon. Its subcellular location is the neuron projection. The protein localises to the cell membrane. The protein resides in the cytoplasmic vesicle. It is found in the clathrin-coated vesicle membrane. It localises to the golgi apparatus membrane. Its subcellular location is the podosome. The protein localises to the early endosome. The protein resides in the dendrite. It is found in the postsynaptic density. In terms of biological role, adapter protein that binds F-actin and DNM1, and thereby plays a role in receptor-mediated endocytosis. Plays a role in the reorganization of the actin cytoskeleton, formation of cell projections, such as neurites, in neuron morphogenesis and synapse formation via its interaction with WASL and COBL. Does not bind G-actin and promote actin polymerization by itself. Required for the formation of organized podosome rosettes. May act as a common effector of antigen receptor-signaling pathways in leukocytes. Acts as a key component of the immunological synapse that regulates T-cell activation by bridging TCRs and the actin cytoskeleton to gene activation and endocytic processes. This chain is Drebrin-like protein (DBNL), found in Homo sapiens (Human).